The chain runs to 113 residues: Small ribosomal subunit protein bS6 (113 aa).

It belongs to the bacterial ribosomal protein bS6 family.

Binds together with bS18 to 16S ribosomal RNA. The protein is Small ribosomal subunit protein bS6 of Buchnera aphidicola subsp. Schizaphis graminum (strain Sg).